The chain runs to 316 residues: Olfactory receptor 2H1 (316 aa).

Residues 1–23 are Extracellular-facing; it reads MVNQSSPMGFLLLGFSEHPALER. Asn3 carries N-linked (GlcNAc...) asparagine glycosylation. The helical transmembrane segment at 24 to 47 threads the bilayer; the sequence is TLFVVVFTSYLLTLVGNTLIILLS. Residues 48–55 lie on the Cytoplasmic side of the membrane; it reads VLYPRLHS. The chain crosses the membrane as a helical span at residues 56-77; the sequence is PMYFFLSDLSFLDLCFTTSCVP. Topologically, residues 78–98 are extracellular; sequence QMLVNLWGPKKTISFLGCSVQ. Residues Cys95 and Cys187 are joined by a disulfide bond. Residues 99–118 traverse the membrane as a helical segment; sequence LFIFLSLGTTECILLTVMAF. Residues 119–137 lie on the Cytoplasmic side of the membrane; it reads DRYVAVCQPLHYATIIHPR. The helical transmembrane segment at 138 to 156 threads the bilayer; that stretch reads LCWQLASVAWVMSLVQSIV. Residues 157 to 193 lie on the Extracellular side of the membrane; sequence QTPSTLHLPFCPHQQIDDFLCEVPSLIRLSCGDTSYN. Residues 194–217 form a helical membrane-spanning segment; that stretch reads EIQLAVSSVIFVVVPLSLILASYG. At 218–234 the chain is on the cytoplasmic side; the sequence is ATAQAVLRINSATAWRK. A helical transmembrane segment spans residues 235-257; it reads AFGTCSSHLTVVTLFYSSVIAVY. The Extracellular segment spans residues 258–270; that stretch reads LQPKNPYAQGRGK. A helical transmembrane segment spans residues 271–290; it reads FFGLFYAVGTPSLNPLVYTL. Over 291–316 the chain is Cytoplasmic; sequence RNKEIKRALRRLLGKERDSRESWRAA.

It belongs to the G-protein coupled receptor 1 family.

The protein localises to the cell membrane. Its function is as follows. Odorant receptor. The protein is Olfactory receptor 2H1 (OR2H1) of Homo sapiens (Human).